A 366-amino-acid polypeptide reads, in one-letter code: Tyrosine--tRNA ligase (366 aa).

Residues tyrosine 41, tyrosine 167, glutamine 171, aspartate 174, and glutamine 189 each coordinate L-tyrosine. A 'KMSKS' region motif is present at residues 241–245 (KMSKS). ATP is bound at residue lysine 244.

It belongs to the class-I aminoacyl-tRNA synthetase family. TyrS type 4 subfamily. In terms of assembly, homodimer.

It localises to the cytoplasm. It carries out the reaction tRNA(Tyr) + L-tyrosine + ATP = L-tyrosyl-tRNA(Tyr) + AMP + diphosphate + H(+). In terms of biological role, catalyzes the attachment of tyrosine to tRNA(Tyr) in a two-step reaction: tyrosine is first activated by ATP to form Tyr-AMP and then transferred to the acceptor end of tRNA(Tyr). This chain is Tyrosine--tRNA ligase, found in Saccharolobus solfataricus (strain ATCC 35092 / DSM 1617 / JCM 11322 / P2) (Sulfolobus solfataricus).